Reading from the N-terminus, the 137-residue chain is Putative pre-16S rRNA nuclease (137 aa).

Belongs to the YqgF nuclease family.

Its subcellular location is the cytoplasm. Could be a nuclease involved in processing of the 5'-end of pre-16S rRNA. This is Putative pre-16S rRNA nuclease from Bacillus cytotoxicus (strain DSM 22905 / CIP 110041 / 391-98 / NVH 391-98).